The sequence spans 289 residues: MSFKDRLFICSQYLLPHHLLSRLIGFAADCRATWFKDRLIAWFARRYQVDMREAQVEDLQAYEHFNAFFTRALKDGARPLAQEPGAVLCPADGAISQLGPIEHGRIFQAKGHSYSLAELLGGDAELAAPFMGGDFATVYLSPRDYHRVHMPLAGTLREMVYVPGRLFSVNQTTAENVPELFARNERVVCLFDTERGPMAVVLVGAMIVASIETVWAGLVTPPKRELKTFRYDEAARAPIRLEKGAELGRFKLGSTAIVLFGPQQVAFNDGLGAASPVRMGECLALPKQA.

Active-site charge relay system; for autoendoproteolytic cleavage activity residues include Asp-92, His-149, and Ser-254. Ser-254 functions as the Schiff-base intermediate with substrate; via pyruvic acid; for decarboxylase activity in the catalytic mechanism. Ser-254 bears the Pyruvic acid (Ser); by autocatalysis mark.

This sequence belongs to the phosphatidylserine decarboxylase family. PSD-B subfamily. Prokaryotic type I sub-subfamily. Heterodimer of a large membrane-associated beta subunit and a small pyruvoyl-containing alpha subunit. Requires pyruvate as cofactor. Post-translationally, is synthesized initially as an inactive proenzyme. Formation of the active enzyme involves a self-maturation process in which the active site pyruvoyl group is generated from an internal serine residue via an autocatalytic post-translational modification. Two non-identical subunits are generated from the proenzyme in this reaction, and the pyruvate is formed at the N-terminus of the alpha chain, which is derived from the carboxyl end of the proenzyme. The autoendoproteolytic cleavage occurs by a canonical serine protease mechanism, in which the side chain hydroxyl group of the serine supplies its oxygen atom to form the C-terminus of the beta chain, while the remainder of the serine residue undergoes an oxidative deamination to produce ammonia and the pyruvoyl prosthetic group on the alpha chain. During this reaction, the Ser that is part of the protease active site of the proenzyme becomes the pyruvoyl prosthetic group, which constitutes an essential element of the active site of the mature decarboxylase.

It localises to the cell membrane. The enzyme catalyses a 1,2-diacyl-sn-glycero-3-phospho-L-serine + H(+) = a 1,2-diacyl-sn-glycero-3-phosphoethanolamine + CO2. The protein operates within phospholipid metabolism; phosphatidylethanolamine biosynthesis; phosphatidylethanolamine from CDP-diacylglycerol: step 2/2. Its function is as follows. Catalyzes the formation of phosphatidylethanolamine (PtdEtn) from phosphatidylserine (PtdSer). In Pseudomonas aeruginosa (strain UCBPP-PA14), this protein is Phosphatidylserine decarboxylase proenzyme.